Reading from the N-terminus, the 196-residue chain is Peroxisome assembly protein 22 (196 aa).

Residues 15-37 traverse the membrane as a helical segment; sequence LWIAALVAASIVTISYKVYSSYI.

It belongs to the peroxin-22 family.

It localises to the peroxisome membrane. Functionally, involved in peroxisome biogenesis. In Debaryomyces hansenii (strain ATCC 36239 / CBS 767 / BCRC 21394 / JCM 1990 / NBRC 0083 / IGC 2968) (Yeast), this protein is Peroxisome assembly protein 22 (PEX22).